The chain runs to 493 residues: Glutamyl-tRNA(Gln) amidotransferase subunit A (493 aa).

Residues Lys81 and Ser156 each act as charge relay system in the active site. Catalysis depends on Ser180, which acts as the Acyl-ester intermediate.

It belongs to the amidase family. GatA subfamily. As to quaternary structure, heterotrimer of A, B and C subunits.

The enzyme catalyses L-glutamyl-tRNA(Gln) + L-glutamine + ATP + H2O = L-glutaminyl-tRNA(Gln) + L-glutamate + ADP + phosphate + H(+). In terms of biological role, allows the formation of correctly charged Gln-tRNA(Gln) through the transamidation of misacylated Glu-tRNA(Gln) in organisms which lack glutaminyl-tRNA synthetase. The reaction takes place in the presence of glutamine and ATP through an activated gamma-phospho-Glu-tRNA(Gln). The chain is Glutamyl-tRNA(Gln) amidotransferase subunit A from Mycolicibacterium paratuberculosis (strain ATCC BAA-968 / K-10) (Mycobacterium paratuberculosis).